Here is a 158-residue protein sequence, read N- to C-terminus: NAD(P)H-quinone oxidoreductase subunit J, chloroplastic (158 aa).

This sequence belongs to the complex I 30 kDa subunit family. In terms of assembly, NDH is composed of at least 16 different subunits, 5 of which are encoded in the nucleus.

The protein localises to the plastid. It localises to the chloroplast thylakoid membrane. The enzyme catalyses a plastoquinone + NADH + (n+1) H(+)(in) = a plastoquinol + NAD(+) + n H(+)(out). It catalyses the reaction a plastoquinone + NADPH + (n+1) H(+)(in) = a plastoquinol + NADP(+) + n H(+)(out). Functionally, NDH shuttles electrons from NAD(P)H:plastoquinone, via FMN and iron-sulfur (Fe-S) centers, to quinones in the photosynthetic chain and possibly in a chloroplast respiratory chain. The immediate electron acceptor for the enzyme in this species is believed to be plastoquinone. Couples the redox reaction to proton translocation, and thus conserves the redox energy in a proton gradient. This Pelargonium hortorum (Common geranium) protein is NAD(P)H-quinone oxidoreductase subunit J, chloroplastic.